The chain runs to 436 residues: Trigger factor (436 aa).

A PPIase FKBP-type domain is found at 161–246 (GDQVNIDFVG…VNSVAAPQLP (86 aa)).

The protein belongs to the FKBP-type PPIase family. Tig subfamily.

It localises to the cytoplasm. The enzyme catalyses [protein]-peptidylproline (omega=180) = [protein]-peptidylproline (omega=0). Functionally, involved in protein export. Acts as a chaperone by maintaining the newly synthesized protein in an open conformation. Functions as a peptidyl-prolyl cis-trans isomerase. This is Trigger factor from Stutzerimonas stutzeri (strain A1501) (Pseudomonas stutzeri).